The chain runs to 356 residues: Tyrosinase P (356 aa).

An N-terminal signal peptide occupies residues 1-19 (MGFYRNLVLVAASCTQALG). N-linked (GlcNAc...) asparagine glycosylation occurs at asparagine 81. Cu cation-binding residues include histidine 87 and histidine 96. N-linked (GlcNAc...) asparagine glycans are attached at residues asparagine 148 and asparagine 193. Histidine 203 provides a ligand contact to Cu cation. Residue asparagine 226 is glycosylated (N-linked (GlcNAc...) asparagine). Histidine 263 and histidine 286 together coordinate Cu cation. N-linked (GlcNAc...) asparagine glycosylation occurs at asparagine 309.

It belongs to the tyrosinase family. Cu(2+) is required as a cofactor. Post-translationally, glycosylated.

It localises to the endoplasmic reticulum lumen. It is found in the golgi apparatus lumen. The catalysed reaction is aspulvinone E + O2 = (5Z)-3-(3,4-dihydroxyphenyl)-5-[(3,4-dihydroxyphenyl)methylidene]-5-oxo-2,5-dihydrofuran-3-olate. The enzyme catalyses aspulvinone E + O2 = (2Z)-2-[(3,4-dioxocyclohexa-1,5-dien-1-yl)methylidene]-4-(4-hydroxyphenyl)-5-oxo-2,5-dihydrofuran-3-olate + H2O. Its activity is regulated as follows. Activity is inhibited by the presence of dithiothreitol (DTT). Tyrosinase; part of the gene cluster that mediates the biosynthesis of Asp-melanin, a pigment that confers resistance against UV light and hampers phagocytosis by soil amoeba. The nonribosomal peptide synthase melA converts 4-hydroxyphenylpyruvate (4-HPPA) to aspulvinone E. The tyrosinase tyrP then performs hydroxylations of both aromatic moieties of aspulvinone E. The product of tyrP is highly unstable, and, due to the high reactivity of methides and ortho-diquinones, the polymeric Asp-melanin forms spontaneously. In Aspergillus terreus, this protein is Tyrosinase P (tyrP).